The primary structure comprises 220 residues: uncharacterized protein (220 aa).

Helical transmembrane passes span 61-81 (LISV…SFFG), 85-105 (SVMF…YGAF), 115-135 (FVII…ILLL), and 150-170 (LPLE…SLLL).

It localises to the membrane. This is an uncharacterized protein from Caenorhabditis elegans.